The sequence spans 194 residues: Methylated-DNA--protein-cysteine methyltransferase (194 aa).

Tyr125 and Arg139 together coordinate DNA. Cys156 (nucleophile; methyl group acceptor) is an active-site residue. Ser162 contacts DNA.

The protein belongs to the MGMT family.

It is found in the nucleus. It catalyses the reaction a 6-O-methyl-2'-deoxyguanosine in DNA + L-cysteinyl-[protein] = S-methyl-L-cysteinyl-[protein] + a 2'-deoxyguanosine in DNA. The catalysed reaction is a 4-O-methyl-thymidine in DNA + L-cysteinyl-[protein] = a thymidine in DNA + S-methyl-L-cysteinyl-[protein]. Its function is as follows. Involved in the cellular defense against the biological effects of O6-methylguanine (O6-MeG) and O4-methylthymine (O4-MeT) in DNA. Repairs the methylated nucleobase in DNA by stoichiometrically transferring the methyl group to a cysteine residue in the enzyme. This is a suicide reaction: the enzyme is irreversibly inactivated. The chain is Methylated-DNA--protein-cysteine methyltransferase (MGT1) from Scheffersomyces stipitis (strain ATCC 58785 / CBS 6054 / NBRC 10063 / NRRL Y-11545) (Yeast).